A 432-amino-acid polypeptide reads, in one-letter code: Gamma-glutamyl phosphate reductase (432 aa).

The protein belongs to the gamma-glutamyl phosphate reductase family.

Its subcellular location is the cytoplasm. It catalyses the reaction L-glutamate 5-semialdehyde + phosphate + NADP(+) = L-glutamyl 5-phosphate + NADPH + H(+). The protein operates within amino-acid biosynthesis; L-proline biosynthesis; L-glutamate 5-semialdehyde from L-glutamate: step 2/2. In terms of biological role, catalyzes the NADPH-dependent reduction of L-glutamate 5-phosphate into L-glutamate 5-semialdehyde and phosphate. The product spontaneously undergoes cyclization to form 1-pyrroline-5-carboxylate. This is Gamma-glutamyl phosphate reductase from Deinococcus radiodurans (strain ATCC 13939 / DSM 20539 / JCM 16871 / CCUG 27074 / LMG 4051 / NBRC 15346 / NCIMB 9279 / VKM B-1422 / R1).